We begin with the raw amino-acid sequence, 236 residues long: Biosynthetic peptidoglycan transglycosylase (236 aa).

A helical membrane pass occupies residues 12-31 (ALFWFAAGSIVLVLVFRWVP).

Belongs to the glycosyltransferase 51 family.

The protein localises to the cell inner membrane. The catalysed reaction is [GlcNAc-(1-&gt;4)-Mur2Ac(oyl-L-Ala-gamma-D-Glu-L-Lys-D-Ala-D-Ala)](n)-di-trans,octa-cis-undecaprenyl diphosphate + beta-D-GlcNAc-(1-&gt;4)-Mur2Ac(oyl-L-Ala-gamma-D-Glu-L-Lys-D-Ala-D-Ala)-di-trans,octa-cis-undecaprenyl diphosphate = [GlcNAc-(1-&gt;4)-Mur2Ac(oyl-L-Ala-gamma-D-Glu-L-Lys-D-Ala-D-Ala)](n+1)-di-trans,octa-cis-undecaprenyl diphosphate + di-trans,octa-cis-undecaprenyl diphosphate + H(+). It functions in the pathway cell wall biogenesis; peptidoglycan biosynthesis. Functionally, peptidoglycan polymerase that catalyzes glycan chain elongation from lipid-linked precursors. This Pseudomonas putida (strain W619) protein is Biosynthetic peptidoglycan transglycosylase.